Here is a 397-residue protein sequence, read N- to C-terminus: MQKQNIVILGSTGSIGKSTLSVIENNPQKYHAFALVGGKNVEAMFEQCIKFRPHFAALDDVNAAKILREKLIAHHIPTEVLAGRRAICELAAHPDADQIMASIVGAAGLLPTLSAVKAGKRVLLANKESLVTCGQLFIDAVKNYGSKLLPVDSEHNAIFQSLPPEAQEKIGFCPLSELGVSKIILTGSGGPFRYTPLEQFTNITPEQAVAHPNWSMGKKISVDSATMMNKGLEYIEARWLFNASAEEMEVIIHPQSIIHSMVRYVDGSVITQMGNPDMRTPIAETMAYPHRTFAGVEPLDFFKIKELTFIEPDFNRYPNLKLAIDAFAAGQYATTAMNAANEIAVQAFLDRQIGFMDIAKINSKTIERISPYTIQNIDDVLEIDAQAREIAKTLLRE.

NADPH-binding residues include Thr12, Gly13, Ser14, Ile15, Gly38, Lys39, Asn40, and Asn126. Lys127 lines the 1-deoxy-D-xylulose 5-phosphate pocket. Glu128 contributes to the NADPH binding site. Asp152 is a binding site for Mn(2+). Positions 153, 154, 188, and 211 each coordinate 1-deoxy-D-xylulose 5-phosphate. Glu154 contributes to the Mn(2+) binding site. Gly217 provides a ligand contact to NADPH. Positions 224, 229, 230, and 233 each coordinate 1-deoxy-D-xylulose 5-phosphate. Glu233 provides a ligand contact to Mn(2+).

This sequence belongs to the DXR family. Requires Mg(2+) as cofactor. The cofactor is Mn(2+).

It carries out the reaction 2-C-methyl-D-erythritol 4-phosphate + NADP(+) = 1-deoxy-D-xylulose 5-phosphate + NADPH + H(+). The protein operates within isoprenoid biosynthesis; isopentenyl diphosphate biosynthesis via DXP pathway; isopentenyl diphosphate from 1-deoxy-D-xylulose 5-phosphate: step 1/6. Its function is as follows. Catalyzes the NADPH-dependent rearrangement and reduction of 1-deoxy-D-xylulose-5-phosphate (DXP) to 2-C-methyl-D-erythritol 4-phosphate (MEP). In Haemophilus influenzae (strain ATCC 51907 / DSM 11121 / KW20 / Rd), this protein is 1-deoxy-D-xylulose 5-phosphate reductoisomerase.